Reading from the N-terminus, the 137-residue chain is Leaf-specific thionin DB4 (137 aa).

The N-terminal stretch at 1–28 (MAPSKSIKSVVICVLILGLVLEQVQVEG) is a signal peptide. 4 cysteine pairs are disulfide-bonded: Cys-31/Cys-68, Cys-32/Cys-60, Cys-40/Cys-58, and Cys-44/Cys-54. Positions 75 to 137 (LNLLPESGEP…DGAVIQSVEA (63 aa)) are cleaved as a propeptide — acidic domain.

This sequence belongs to the plant thionin (TC 1.C.44) family. 4 C-C subfamily.

The protein localises to the secreted. Thionins are small plant proteins which are toxic to animal cells. They seem to exert their toxic effect at the level of the cell membrane. Their precise function is not known. The chain is Leaf-specific thionin DB4 (THI1.3) from Hordeum vulgare (Barley).